A 115-amino-acid chain; its full sequence is Transcription initiation factor IIA subunit 2 (115 aa).

The protein belongs to the TFIIA subunit 2 family. As to quaternary structure, TFIIA is a heterodimer of the large unprocessed subunit 1 and a small subunit gamma.

The protein resides in the nucleus. Functionally, TFIIA is a component of the transcription machinery of RNA polymerase II and plays an important role in transcriptional activation. TFIIA in a complex with tbp mediates transcriptional activity. This is Transcription initiation factor IIA subunit 2 (gtf2a2) from Dictyostelium discoideum (Social amoeba).